Consider the following 473-residue polypeptide: Photosystem II CP43 reaction center protein (473 aa).

Residues 1–14 (MKTLYSLRRFYPVE) constitute a propeptide that is removed on maturation. T15 is modified (N-acetylthreonine). A Phosphothreonine modification is found at T15. 5 consecutive transmembrane segments (helical) span residues 69-93 (LFEVAHFVPEKPMYEQGLILLPHLA), 134-155 (LLGPETLEESFPFFGYVWKDRN), 178-200 (KALYFGGVYDTWAPGGGDVRKIT), 255-275 (KPFAWARRALVWSGEAYLSYS), and 291-312 (WFNNTAYPSEFYGPTGPEASQA). [CaMn4O5] cluster is bound at residue E367. The helical transmembrane segment at 447–471 (RARAAAAGFEKGIDRDFEPVLSMTP) threads the bilayer.

The protein belongs to the PsbB/PsbC family. PsbC subfamily. As to quaternary structure, PSII is composed of 1 copy each of membrane proteins PsbA, PsbB, PsbC, PsbD, PsbE, PsbF, PsbH, PsbI, PsbJ, PsbK, PsbL, PsbM, PsbT, PsbX, PsbY, PsbZ, Psb30/Ycf12, at least 3 peripheral proteins of the oxygen-evolving complex and a large number of cofactors. It forms dimeric complexes. Requires Binds multiple chlorophylls and provides some of the ligands for the Ca-4Mn-5O cluster of the oxygen-evolving complex. It may also provide a ligand for a Cl- that is required for oxygen evolution. PSII binds additional chlorophylls, carotenoids and specific lipids. as cofactor.

The protein resides in the plastid. The protein localises to the chloroplast thylakoid membrane. Functionally, one of the components of the core complex of photosystem II (PSII). It binds chlorophyll and helps catalyze the primary light-induced photochemical processes of PSII. PSII is a light-driven water:plastoquinone oxidoreductase, using light energy to abstract electrons from H(2)O, generating O(2) and a proton gradient subsequently used for ATP formation. The polypeptide is Photosystem II CP43 reaction center protein (Daucus carota (Wild carrot)).